A 136-amino-acid chain; its full sequence is Large ribosomal subunit protein uL16 (136 aa).

Belongs to the universal ribosomal protein uL16 family. Part of the 50S ribosomal subunit.

In terms of biological role, binds 23S rRNA and is also seen to make contacts with the A and possibly P site tRNAs. This chain is Large ribosomal subunit protein uL16, found in Rickettsia rickettsii (strain Iowa).